A 215-amino-acid polypeptide reads, in one-letter code: Eukaryotic translation initiation factor 4E-1 (215 aa).

The interval 1-35 (MAEDTETRPASAGAEEREEGEIADDGDGSAAAAAG) is disordered. A compositionally biased stretch (acidic residues) spans 16 to 27 (EREEGEIADDGD). EIF4G-binding stretches follow at residues 40–43 (HPLE) and 50–86 (FDNP…NNIH). MRNA is bound by residues 58 to 63 (RAVAWG), Lys-90, and 108 to 109 (WE). Cys-113 and Cys-151 are joined by a disulfide. Positions 134–143 (HTLLALIGEQ) are EIF4G-binding. MRNA contacts are provided by residues 158–163 (RKNQER) and 203–207 (KRSDK).

Belongs to the eukaryotic initiation factor 4E family. As to quaternary structure, EIF4F is a multi-subunit complex, the composition of which varies with external and internal environmental conditions. It is composed of at least EIF4A, EIF4E and EIF4G. EIF4E is also known to interact with other partners. In higher plants two isoforms of EIF4F have been identified, named isoform EIF4F and isoform EIF(iso)4F. Isoform EIF4F has subunits p220 and p26, whereas isoform EIF(iso)4F has subunits p82 and p28. (Microbial infection) Interacts with potyvirus viral genome-linked protein (VPg); this interaction is possible in susceptible hosts but impaired in resistant plants. According to the redox status, the Cys-113-Cys-151 disulfide bridge may have a role in regulating protein function by affecting its ability to bind capped mRNA.

It localises to the nucleus. The protein resides in the cytoplasm. Component of the protein complex eIF4F, which is involved in the recognition of the mRNA cap, ATP-dependent unwinding of 5'-terminal secondary structure and recruitment of mRNA to the ribosome. Recognizes and binds the 7-methylguanosine-containing mRNA cap during an early step in the initiation of protein synthesis and facilitates ribosome binding by inducing the unwinding of the mRNAs secondary structures. Key component of recessive resistance to potyviruses and bymoviruses, including barley yellow mosaic virus and barley mild mosaic virus. In terms of biological role, (Microbial infection) Susceptibility host factor required for viral infection by recruiting viral RNAs to the host ribosomal complex via an interaction with viral genome-linked protein (VPg). This chain is Eukaryotic translation initiation factor 4E-1, found in Hordeum vulgare subsp. vulgare (Domesticated barley).